The primary structure comprises 223 residues: Deoxyribose-phosphate aldolase (223 aa).

Aspartate 91 serves as the catalytic Proton donor/acceptor. The Schiff-base intermediate with acetaldehyde role is filled by lysine 153. Lysine 182 functions as the Proton donor/acceptor in the catalytic mechanism.

This sequence belongs to the DeoC/FbaB aldolase family. DeoC type 1 subfamily.

Its subcellular location is the cytoplasm. It catalyses the reaction 2-deoxy-D-ribose 5-phosphate = D-glyceraldehyde 3-phosphate + acetaldehyde. The protein operates within carbohydrate degradation; 2-deoxy-D-ribose 1-phosphate degradation; D-glyceraldehyde 3-phosphate and acetaldehyde from 2-deoxy-alpha-D-ribose 1-phosphate: step 2/2. Functionally, catalyzes a reversible aldol reaction between acetaldehyde and D-glyceraldehyde 3-phosphate to generate 2-deoxy-D-ribose 5-phosphate. This Streptococcus pyogenes serotype M3 (strain ATCC BAA-595 / MGAS315) protein is Deoxyribose-phosphate aldolase.